We begin with the raw amino-acid sequence, 690 residues long: Elongation factor G (690 aa).

A tr-type G domain is found at 8–283 (SKCRNIGIMA…AVVDYLPSPN (276 aa)). GTP contacts are provided by residues 17 to 24 (AHIDAGKT), 81 to 85 (DTPGH), and 135 to 138 (NKMD).

The protein belongs to the TRAFAC class translation factor GTPase superfamily. Classic translation factor GTPase family. EF-G/EF-2 subfamily.

Its subcellular location is the cytoplasm. Functionally, catalyzes the GTP-dependent ribosomal translocation step during translation elongation. During this step, the ribosome changes from the pre-translocational (PRE) to the post-translocational (POST) state as the newly formed A-site-bound peptidyl-tRNA and P-site-bound deacylated tRNA move to the P and E sites, respectively. Catalyzes the coordinated movement of the two tRNA molecules, the mRNA and conformational changes in the ribosome. This Anaplasma phagocytophilum (strain HZ) protein is Elongation factor G.